The chain runs to 170 residues: Ribosome-binding factor A (170 aa).

Positions 123–170 (AKAGVYAGDEDPYVKPRVIGEDEDDDDEEGDEDGDDVDRSAPGYEPAH) are disordered. Positions 143 to 158 (EDEDDDDEEGDEDGDD) are enriched in acidic residues.

The protein belongs to the RbfA family. Monomer. Binds 30S ribosomal subunits, but not 50S ribosomal subunits or 70S ribosomes.

The protein localises to the cytoplasm. Its function is as follows. One of several proteins that assist in the late maturation steps of the functional core of the 30S ribosomal subunit. Associates with free 30S ribosomal subunits (but not with 30S subunits that are part of 70S ribosomes or polysomes). Required for efficient processing of 16S rRNA. May interact with the 5'-terminal helix region of 16S rRNA. This chain is Ribosome-binding factor A, found in Clavibacter sepedonicus (Clavibacter michiganensis subsp. sepedonicus).